The primary structure comprises 192 residues: Ion-translocating oxidoreductase complex subunit A (192 aa).

6 consecutive transmembrane segments (helical) span residues 5-25 (LLLL…FLGL), 39-59 (IGMS…SYLV), 65-85 (LPFD…AVVV), 102-122 (ALGI…VALL), 134-154 (AIFG…FSAM), and 171-191 (AIAM…TGLV).

This sequence belongs to the NqrDE/RnfAE family. In terms of assembly, the complex is composed of six subunits: RnfA, RnfB, RnfC, RnfD, RnfE and RnfG.

The protein resides in the cell inner membrane. In terms of biological role, part of a membrane-bound complex that couples electron transfer with translocation of ions across the membrane. The polypeptide is Ion-translocating oxidoreductase complex subunit A (Shewanella baltica (strain OS223)).